Reading from the N-terminus, the 237-residue chain is Ribose-5-phosphate isomerase A (237 aa).

Substrate-binding positions include Ser30 to Thr33, Asp87 to Asp90, and Lys100 to Gly103. Catalysis depends on Glu109, which acts as the Proton acceptor. Lys127 lines the substrate pocket.

This sequence belongs to the ribose 5-phosphate isomerase family. In terms of assembly, homodimer.

It carries out the reaction aldehydo-D-ribose 5-phosphate = D-ribulose 5-phosphate. The protein operates within carbohydrate degradation; pentose phosphate pathway; D-ribose 5-phosphate from D-ribulose 5-phosphate (non-oxidative stage): step 1/1. Catalyzes the reversible conversion of ribose-5-phosphate to ribulose 5-phosphate. The chain is Ribose-5-phosphate isomerase A from Prochlorococcus marinus (strain MIT 9211).